The following is a 504-amino-acid chain: Bacterial leucyl aminopeptidase (504 aa).

An N-terminal signal peptide occupies residues Met1 to Ala21. Residues Glu22–Val106 constitute a propeptide that is removed on maturation. Residues His203, Asp223, Glu258, and Asp285 each coordinate Zn(2+). Cysteines 329 and 333 form a disulfide. Residue His362 participates in Zn(2+) binding. A propeptide spans Leu406–Phe504 (removed in mature form).

This sequence belongs to the peptidase M28 family. M28E subfamily. It depends on Zn(2+) as a cofactor.

Its subcellular location is the secreted. The enzyme catalyses Release of an N-terminal amino acid, preferentially leucine, but not glutamic or aspartic acids.. This is Bacterial leucyl aminopeptidase from Vibrio proteolyticus (Aeromonas proteolytica).